A 132-amino-acid chain; its full sequence is MSLNIRVIAPDGLIWDTTAEGVVLPSLTGQLGILTGHAPLITSLEIGILRIKTNSKWTPIIVLGGFAVIKDDEVLVLISGVEEVIKEDYSKAKSILAKAKIDLDSAKTTKEIIDASQELKIASAKVKAFKFI.

This sequence belongs to the ATPase epsilon chain family. F-type ATPases have 2 components, CF(1) - the catalytic core - and CF(0) - the membrane proton channel. CF(1) has five subunits: alpha(3), beta(3), gamma(1), delta(1), epsilon(1). CF(0) has three main subunits: a, b and c.

Its subcellular location is the plastid. It is found in the chloroplast thylakoid membrane. In terms of biological role, produces ATP from ADP in the presence of a proton gradient across the membrane. In Pylaiella littoralis (Seaweed), this protein is ATP synthase epsilon chain, chloroplastic.